Consider the following 57-residue polypeptide: High-potential iron-sulfur protein (57 aa).

[4Fe-4S] cluster-binding residues include Cys-21, Cys-24, Cys-33, and Cys-46.

It belongs to the high-potential iron-sulfur protein (HiPIP) family. In terms of assembly, homodimer.

Functionally, specific class of high-redox-potential 4Fe-4S ferredoxins. Functions in anaerobic electron transport in most purple and in some other photosynthetic bacteria and in at least one genus (Paracoccus) of halophilic, denitrifying bacteria. This Rhodopila globiformis (Rhodopseudomonas globiformis) protein is High-potential iron-sulfur protein (hip).